We begin with the raw amino-acid sequence, 284 residues long: Protoheme IX farnesyltransferase (284 aa).

The next 9 helical transmembrane spans lie at 2-19 (SLVVFTALVGLLVAPVTV), 23-45 (IALTGILFIALGAGASGALNMWS), 69-89 (GEALGIGLALSGIAVVMLGLA), 92-112 (LFAAGLLAFTIFFYAVVYSMW), 121-141 (IVIGGAAGAFPPMIGWAVATG), 148-168 (LFMFALIFMWTPPHFWSLALF), 194-214 (VLVYSLLLAPLAVAGAFTGTG), 217-237 (LYLATALALNGWLLVGAVRTW), and 263-283 (LFLHFGAILAEAALKPYGLGG).

It belongs to the UbiA prenyltransferase family. Protoheme IX farnesyltransferase subfamily. In terms of assembly, interacts with CtaA.

It localises to the cell inner membrane. The enzyme catalyses heme b + (2E,6E)-farnesyl diphosphate + H2O = Fe(II)-heme o + diphosphate. Its pathway is porphyrin-containing compound metabolism; heme O biosynthesis; heme O from protoheme: step 1/1. Converts heme B (protoheme IX) to heme O by substitution of the vinyl group on carbon 2 of heme B porphyrin ring with a hydroxyethyl farnesyl side group. The polypeptide is Protoheme IX farnesyltransferase (Cereibacter sphaeroides (Rhodobacter sphaeroides)).